A 376-amino-acid polypeptide reads, in one-letter code: Ribonucleoside-diphosphate reductase 1 subunit beta (376 aa).

Fe cation-binding residues include aspartate 85, glutamate 116, and histidine 119. The active site involves tyrosine 123. Glutamate 205, glutamate 239, and histidine 242 together coordinate Fe cation.

It belongs to the ribonucleoside diphosphate reductase small chain family. As to quaternary structure, tetramer of two alpha (R1) and two beta (R2) subunits. The B1 protein is a dimer of alpha subunits. A radical transfer pathway occurs between Tyr-123 of R2 and R1. Fe cation serves as cofactor.

The catalysed reaction is a 2'-deoxyribonucleoside 5'-diphosphate + [thioredoxin]-disulfide + H2O = a ribonucleoside 5'-diphosphate + [thioredoxin]-dithiol. In terms of biological role, provides the precursors necessary for DNA synthesis. Catalyzes the biosynthesis of deoxyribonucleotides from the corresponding ribonucleotides. R2 contains the tyrosyl radical required for catalysis. The protein is Ribonucleoside-diphosphate reductase 1 subunit beta (nrdB) of Salmonella typhimurium (strain LT2 / SGSC1412 / ATCC 700720).